Here is a 559-residue protein sequence, read N- to C-terminus: Glucans biosynthesis protein G (559 aa).

Positions 1-37 are cleaved as a signal peptide; it reads MVSLLSCGTSASSHIVKKALTRLSLAMAAGLCFNLAA.

This sequence belongs to the OpgD/OpgG family.

Its subcellular location is the periplasm. It functions in the pathway glycan metabolism; osmoregulated periplasmic glucan (OPG) biosynthesis. Involved in the biosynthesis of osmoregulated periplasmic glucans (OPGs). In Shewanella frigidimarina (strain NCIMB 400), this protein is Glucans biosynthesis protein G.